The following is an 807-amino-acid chain: FAD-linked oxidoreductase pytB (807 aa).

The first 18 residues, 1–18, serve as a signal peptide directing secretion; it reads MRFLGIAAVATFSTVVSA. Residues N45, N106, N120, N242, N295, N351, N419, and N699 are each glycosylated (N-linked (GlcNAc...) asparagine). An FAD-binding PCMH-type domain is found at 60–231; sequence FDELPVLLAY…VEFTLSLTSI (172 aa).

Belongs to the oxygen-dependent FAD-linked oxidoreductase family. It depends on FAD as a cofactor.

It functions in the pathway secondary metabolite biosynthesis. Its function is as follows. FAD-linked oxidoreductase; part of the gene cluster that mediates the biosynthesis of pyranterreones, a family of antioxidative compounds. The first step of pyranonigrins biosynthesis is performed by the hybrid PKS-NRPS synthetase pytA that condenses 4 malonyl-CoA units ato the acetyl starter unit by the modular PKS of pytA. The acyl chain is then connected to an L-serine through the amide bond by the modular NRPS of pytA. A tetramic acid is formed and released from the PKS-NRPS pytA to give pyranterreone 5 with the help of the thioesterase pytI. Pyranterreone 5 could be methylated by pytC to afford pyranterreone 6. Both pyranterreones 5 and 6 are subsequently oxidized by the FAD-linked oxidoreductase pytB and the cytochrome P450 monooxygenase pytD to form the fused gamma-pyrone core, resulting in pyranterreones 7 and 11, respectively. The hydroxy group at C-8 of pyranterreones 7 and 11 are dehydrated by the aspartyl protease pytH to form a delta-7 double bond to give pyranterreones 3 and 1, 2 accordingly. The exo-methylene of pyranterreone 3 could be reduced into a pendant methyl by reductase pytE to provide pyranterreone 4, also known as cordylactam. Pyranterreone 4 can be reconverted to pyranterreone 3 through pytB-catalyzed dehydrogenation or further oxidized to pyranterreones 9 and 10. This chain is FAD-linked oxidoreductase pytB, found in Aspergillus terreus (strain NIH 2624 / FGSC A1156).